Here is a 313-residue protein sequence, read N- to C-terminus: Probable 5-dehydro-4-deoxyglucarate dehydratase 1 (313 aa).

The protein belongs to the DapA family.

It catalyses the reaction 5-dehydro-4-deoxy-D-glucarate + H(+) = 2,5-dioxopentanoate + CO2 + H2O. The protein operates within carbohydrate acid metabolism; D-glucarate degradation; 2,5-dioxopentanoate from D-glucarate: step 2/2. The protein is Probable 5-dehydro-4-deoxyglucarate dehydratase 1 of Streptomyces avermitilis (strain ATCC 31267 / DSM 46492 / JCM 5070 / NBRC 14893 / NCIMB 12804 / NRRL 8165 / MA-4680).